The sequence spans 614 residues: UvrABC system protein C (614 aa).

Positions 20–98 (TAPGVYRMYA…IKSLSPRYNV (79 aa)) constitute a GIY-YIG domain. Positions 207 to 242 (DELTRELGEQMQAASEALEFEQAARLRDLISSLRSM) constitute a UVR domain.

It belongs to the UvrC family. In terms of assembly, interacts with UvrB in an incision complex.

It localises to the cytoplasm. Its function is as follows. The UvrABC repair system catalyzes the recognition and processing of DNA lesions. UvrC both incises the 5' and 3' sides of the lesion. The N-terminal half is responsible for the 3' incision and the C-terminal half is responsible for the 5' incision. The chain is UvrABC system protein C from Stenotrophomonas maltophilia (strain R551-3).